The primary structure comprises 587 residues: Glutamine--tRNA ligase (587 aa).

The 'HIGH' region signature appears at 58–68 (PEPNGYLHIGH). ATP is bound by residues 59–61 (EPN) and 65–71 (HIGHAKS). 2 residues coordinate L-glutamine: aspartate 91 and tyrosine 240. ATP-binding positions include threonine 259 and 294 to 295 (RL). Residues 301-305 (VTSKR) carry the 'KMSKS' region motif.

The protein belongs to the class-I aminoacyl-tRNA synthetase family. As to quaternary structure, monomer.

Its subcellular location is the cytoplasm. It carries out the reaction tRNA(Gln) + L-glutamine + ATP = L-glutaminyl-tRNA(Gln) + AMP + diphosphate. This chain is Glutamine--tRNA ligase, found in Bordetella bronchiseptica (strain ATCC BAA-588 / NCTC 13252 / RB50) (Alcaligenes bronchisepticus).